A 2919-amino-acid polypeptide reads, in one-letter code: Cadherin EGF LAG seven-pass G-type receptor 2 (2919 aa).

Residues 1–31 (MRSRAASAPLPTPLLPLLLLLLLLPPSPLLG) form the signal peptide. Residues 32-2380 (DQVGPCRSLG…GEILPLKTLT (2349 aa)) lie on the Extracellular side of the membrane. Residues 156 to 194 (LRAGEGSPEESLGGRRKRNVNTAPQFQPPSYQATVPENQ) are disordered. A compositionally biased stretch (polar residues) spans 175 to 194 (VNTAPQFQPPSYQATVPENQ). 9 consecutive Cadherin domains span residues 182 to 289 (QPPS…DPVF), 290 to 399 (EQQE…APQF), 400 to 505 (SEKR…APIF), 506 to 610 (VSTP…NPTF), 611 to 712 (TQPE…RPVF), 713 to 815 (QSSH…APQF), 816 to 921 (LRDS…PPVF), 922 to 1023 (EQDE…PPVL), and 1028 to 1146 (ILFN…SPLL). 3 N-linked (GlcNAc...) asparagine glycosylation sites follow: asparagine 486, asparagine 557, and asparagine 701. N-linked (GlcNAc...) asparagine glycans are attached at residues asparagine 1036, asparagine 1076, asparagine 1182, and asparagine 1212. Residues 1228-1286 (DDNICLREPCENYMRCVSVLRFDSSAPFIASSSVLFRPIHPVGGLRCRCPPGFTGDYCE) enclose the EGF-like 1; atypical domain. Residues 1288-1318 (EVDLCYSRPCGPHGRCRSREGGYTCLCLDGY) form the EGF-like 2; calcium-binding domain. Disulfide bonds link cysteine 1292/cysteine 1303, cysteine 1297/cysteine 1312, cysteine 1314/cysteine 1323, cysteine 1332/cysteine 1343, cysteine 1337/cysteine 1353, and cysteine 1355/cysteine 1365. The region spanning 1328 to 1366 (HSGRCTPGVCKNGGTCVNLLVGGFKCDCPSGDFEKPFCQ) is the EGF-like 3; calcium-binding domain. A Laminin G-like 1 domain is found at 1367–1571 (VTTRSFPARS…IANNGTVPGC (205 aa)). 2 N-linked (GlcNAc...) asparagine glycosylation sites follow: asparagine 1501 and asparagine 1565. 4 disulfides stabilise this stretch: cysteine 1545/cysteine 1571, cysteine 1578/cysteine 1589, cysteine 1583/cysteine 1598, and cysteine 1600/cysteine 1609. Residues 1574–1610 (KKIVCDSSICHNGGTCVNQWNAFSCECPLGFGGKSCA) form the EGF-like 4; calcium-binding domain. At asparagine 1591 the chain carries (3R)-3-hydroxyasparagine. The Laminin G-like 2 domain maps to 1614 to 1791 (ANPQRFLGSS…GESINVEPGC (178 aa)). N-linked (GlcNAc...) asparagine glycosylation occurs at asparagine 1741. Residues 1787–1829 (VEPGCSWPDPCDSNPCPTNSYCSNDWDSYSCSCVLGYYGDNCT) form the EGF-like 5; calcium-binding domain. 13 cysteine pairs are disulfide-bonded: cysteine 1791–cysteine 1802, cysteine 1797–cysteine 1817, cysteine 1819–cysteine 1828, cysteine 1832–cysteine 1843, cysteine 1837–cysteine 1855, cysteine 1857–cysteine 1866, cysteine 1887–cysteine 1899, cysteine 1889–cysteine 1906, cysteine 1908–cysteine 1921, cysteine 1924–cysteine 1936, cysteine 1926–cysteine 1943, cysteine 1945–cysteine 1954, and cysteine 1957–cysteine 1969. Asparagine 1827 is a glycosylation site (N-linked (GlcNAc...) asparagine). Positions 1830-1867 (NVCDLNPCEHQSVCTRKPNTPHGYICECLPNYLGPYCE) constitute an EGF-like 6; calcium-binding domain. In terms of domain architecture, EGF-like 7; calcium-binding spans 1883–1922 (TCGPCNCDVSKGFDPDCNKTSGECHCKENHYRPPGSPTCL). An N-linked (GlcNAc...) asparagine glycan is attached at asparagine 1900. Residues 1924–1971 (CDCYPTGSLSRVCDPEDGQCPCKPGVIGRQCDRCDNPFAEVTTNGCEV) form the Laminin EGF-like domain. N-linked (GlcNAc...) asparagine glycans are attached at residues asparagine 2024, asparagine 2043, and asparagine 2061. Residues 2199–2369 (ETTVILPESV…AVLMDMSRRE (171 aa)) enclose the GAIN-B domain. The interval 2216-2241 (VRSAGPGEAQETEELARRQRRHPELS) is disordered. 2 disulfide bridges follow: cysteine 2319–cysteine 2351 and cysteine 2339–cysteine 2353. Positions 2319–2369 (CVFWNHSILVSGTGGWSARGCEVVFRNESHVSCQCNHMTSFAVLMDMSRRE) are GPS. 2 N-linked (GlcNAc...) asparagine glycosylation sites follow: asparagine 2323 and asparagine 2345. The helical transmembrane segment at 2381–2401 (YVALGVTLAALMLTFLFLTLL) threads the bilayer. The Cytoplasmic portion of the chain corresponds to 2402 to 2413 (RALRSNQHGIRR). The chain crosses the membrane as a helical span at residues 2414–2433 (NLTAALGLAQLVFLLGINQA). At 2434-2438 (DLPFA) the chain is on the extracellular side. Residues 2439–2459 (CTVIAILLHFLYLCTFSWALL) traverse the membrane as a helical segment. The Cytoplasmic segment spans residues 2460-2480 (EALHLYRALTEVRDVNASPMR). The chain crosses the membrane as a helical span at residues 2481-2501 (FYYMLGWGVPAFITGLAVGLD). At 2502 to 2518 (PEGYGNPDFCWLSVYDT) the chain is on the extracellular side. The chain crosses the membrane as a helical span at residues 2519 to 2539 (LIWSFAGPVAFAVSMSVFLYI). Residues 2540-2563 (LSARASCAAQRQGFEKKGPVSGLR) are Cytoplasmic-facing. A helical membrane pass occupies residues 2564–2584 (SSFTVLLLLSATWLLALLSVN). The Extracellular portion of the chain corresponds to 2585-2591 (SDTLLFH). A helical transmembrane segment spans residues 2592–2612 (YLFAACNCVQGPFIFLSYVVL). The Cytoplasmic segment spans residues 2613 to 2919 (SKEVRKALKF…SEFLFFNFLH (307 aa)). The tract at residues 2690–2884 (LNPGQVPPGL…PPRPPPRQSL (195 aa)) is disordered. Positions 2718-2730 (TDSDSDLSLEDDQ) are enriched in acidic residues. Positions 2791-2800 (GTTTKENSGS) are enriched in polar residues. Residues 2803 to 2815 (LEERPRENGDALT) show a composition bias toward basic and acidic residues. Residues 2857-2868 (GTGSSRGSSISE) show a composition bias toward low complexity.

The protein belongs to the G-protein coupled receptor 2 family. LN-TM7 subfamily. Heterodimer of 2 chains generated by proteolytic processing; the large extracellular N-terminal fragment and the membrane-bound C-terminal fragment predominantly remain associated and non-covalently linked. The iron and 2-oxoglutarate dependent 3-hydroxylation of aspartate and asparagine is (R) stereospecific within EGF domains. Post-translationally, autoproteolytically processed at the GPS region of the GAIN-B domain; this cleavage modulates receptor activity. Expressed in the CNS and in the eye.

The protein localises to the cell membrane. In terms of biological role, receptor that may have an important role in cell/cell signaling during nervous system formation. The chain is Cadherin EGF LAG seven-pass G-type receptor 2 from Mus musculus (Mouse).